The following is a 67-amino-acid chain: Large ribosomal subunit protein uL29 (67 aa).

The protein belongs to the universal ribosomal protein uL29 family.

This chain is Large ribosomal subunit protein uL29 (rpmC), found in Halalkalibacterium halodurans (strain ATCC BAA-125 / DSM 18197 / FERM 7344 / JCM 9153 / C-125) (Bacillus halodurans).